Here is a 90-residue protein sequence, read N- to C-terminus: Mitochondrial import inner membrane translocase subunit Tim9 (90 aa).

A Twin CX3C motif motif is present at residues 24 to 48 (CFNSCVNEFGSRTVSGKEESCANNC). 2 cysteine pairs are disulfide-bonded: cysteine 24/cysteine 48 and cysteine 28/cysteine 44.

The protein belongs to the small Tim family. As to quaternary structure, heterohexamer; composed of 3 copies of tim-9/tin-9.1 and 3 copies of tim-10/tin-10, named soluble 70 kDa complex. The complex associates with the tim-22 component of the TIM22 complex. Interacts with multi-pass transmembrane proteins in transit.

Its subcellular location is the mitochondrion inner membrane. In terms of biological role, mitochondrial intermembrane chaperone that participates in the import and insertion of multi-pass transmembrane proteins into the mitochondrial inner membrane. May also be required for the transfer of beta-barrel precursors from the TOM complex to the sorting and assembly machinery (SAM complex) of the outer membrane. Acts as a chaperone-like protein that protects the hydrophobic precursors from aggregation and guide them through the mitochondrial intermembrane space. This is Mitochondrial import inner membrane translocase subunit Tim9 (tin-9.1) from Caenorhabditis elegans.